The following is a 229-amino-acid chain: uncharacterized protein (229 aa).

The signal sequence occupies residues 1 to 17 (MKKIIALMLFLTFFAHA).

This is an uncharacterized protein from Escherichia coli O157:H7.